Reading from the N-terminus, the 222-residue chain is MIF4G domain-containing protein (222 aa).

One can recognise an MIF4G domain in the interval 3-205 (EPSREEYKIQ…LEIIEFRAAG (203 aa)).

This sequence belongs to the MIF4GD family. As to quaternary structure, interacts with EIF4G1, EIF4G2 and SLBP; probably tethered by SLBP to the 3'-end of mRNAs ending with the histone stem-loop, it also interacts with EIF4G1 which is bound to their 5'-end.

The protein localises to the cytoplasm. The protein resides in the nucleus. Functions in replication-dependent translation of histone mRNAs which differ from other eukaryotic mRNAs in that they do not end with a poly-A tail but a stem-loop. May participate in circularizing those mRNAs specifically enhancing their translation. This is MIF4G domain-containing protein (MIF4GD) from Homo sapiens (Human).